Consider the following 295-residue polypeptide: F-box protein SKIP24 (295 aa).

In terms of domain architecture, F-box; degenerate spans 19–66; sequence VKSSTFSYKDLCCISISSRRLFRLSCDDSLWDLLLVHDFPNHIVSASS. 2 coiled-coil regions span residues 82–129 and 167–209; these read REKE…SSLQ and EGRL…ESMK. Residues 217–245 are disordered; sequence KSIRNGDQGSNGKTKKLKTSINYSGDQVS. The span at 235–245 shows a compositional bias: polar residues; it reads TSINYSGDQVS.

In terms of assembly, part of a SCF (ASK-cullin-F-box) protein ligase complex. Interacts with SKP1A/ASK1 and SPK1B/ASK2.

It participates in protein modification; protein ubiquitination. Functionally, component of SCF(ASK-cullin-F-box) E3 ubiquitin ligase complexes, which may mediate the ubiquitination and subsequent proteasomal degradation of target proteins. The sequence is that of F-box protein SKIP24 (SKIP24) from Arabidopsis thaliana (Mouse-ear cress).